Reading from the N-terminus, the 340-residue chain is Replication factor C subunit 3 (340 aa).

Position 2 is an N-acetylserine (Ser2). Residues 16-19 (VEKY), Arg20, Tyr28, 53-61 (GPPGTGKTS), Asn148, and Arg206 each bind ATP.

This sequence belongs to the activator 1 small subunits family. As to quaternary structure, replication factor C (RFC) is a heteropentamer of subunits RFC1, RFC2, RFC3, RFC4 and RFC5 and forms a complex with POL30/PCNA in the presence of ATP. Component of the RAD24-RFC complex which consists of RAD14, RFC2, RFC3, RFC4 and RFC5 and associates with the checkpoint clamp DDC1:MEC3:RAD17 complex. Component of the ELG1-RFC complex which consists of ELG1, RFC2, RFC3, RFC4 and RFC5. Component of the CTF18-RFC complex, which consists of CTF18, CTF8, DCC1, RFC2, RFC3, RFC4 and RFC5. RFC3 interacts with ECO1 and POL30/PCNA.

It localises to the nucleus. Component of ATP-dependent clamp loader (RFC and RFC-like) complexes for DNA clamps, such as the POL30/PCNA homotrimer and the checkpoint clamp DDC1:MEC3:RAD17 complex. During a clamp loading circle, the RFC:clamp complex binds to DNA and the recognition of the double-stranded/single-stranded junction stimulates ATP hydrolysis by RFC. The complex presumably provides bipartite ATP sites in which one subunit supplies a catalytic site for hydrolysis of ATP bound to the neighboring subunit. Dissociation of RFC from the clamp leaves the clamp encircling DNA. Component of the replication factor C (RFC or activator 1) complex which loads POL30/PCNA and acts during elongation of primed DNA templates by DNA polymerase delta and epsilon. RFC has an essential but redundant activity in sister chromatid cohesion establishment. Component of the RFC-like complex CTF18-RFC which is required for efficient establishment of chromosome cohesion during S-phase and may load or unload POL30/PCNA. Component of the RFC-like RAD24-RFC complex which loads the checkpoint clamp DDC1:MEC3:RAD17 complex and is involved in DNA repair pathways. Component of the RFC-like ELG1-RFC complex which appears to have a role in DNA replication, replication fork re-start, recombination and repair. RFC3 supplies a catalytic site to the ATP site of RFC4. This chain is Replication factor C subunit 3 (RFC3), found in Saccharomyces cerevisiae (strain ATCC 204508 / S288c) (Baker's yeast).